A 429-amino-acid chain; its full sequence is Violacein synthase (429 aa).

3–21 contributes to the FAD binding site; it reads RAIIVGGGLAGGLTAIYLA.

The cofactor is FAD.

The catalysed reaction is protoviolaceinate + NADPH + O2 + H(+) = violaceinate + NADP(+) + H2O. The enzyme catalyses protoviolaceinate + NADH + O2 + H(+) = violaceinate + NAD(+) + H2O. It catalyses the reaction protodeoxyviolaceinate + NADPH + O2 + H(+) = deoxyviolaceinate + NADP(+) + H2O. It carries out the reaction protodeoxyviolaceinate + NADH + O2 + H(+) = deoxyviolaceinate + NAD(+) + H2O. It functions in the pathway pigment biosynthesis; violacein biosynthesis. Catalyzes the hydroxylation of the 16-position of protoviolaceinate and protodeoxyviolaceinate to form violacein and deoxyviolacein, respectively. In Chromobacterium violaceum (strain ATCC 12472 / DSM 30191 / JCM 1249 / CCUG 213 / NBRC 12614 / NCIMB 9131 / NCTC 9757 / MK), this protein is Violacein synthase (vioC).